The chain runs to 157 residues: Endoribonuclease YbeY (157 aa).

His114, His118, and His124 together coordinate Zn(2+).

This sequence belongs to the endoribonuclease YbeY family. Zn(2+) is required as a cofactor.

It localises to the cytoplasm. Functionally, single strand-specific metallo-endoribonuclease involved in late-stage 70S ribosome quality control and in maturation of the 3' terminus of the 16S rRNA. This is Endoribonuclease YbeY from Salmonella dublin (strain CT_02021853).